The chain runs to 78 residues: Antitoxin FitA (78 aa).

In terms of assembly, homodimer in the absence of FitB; forms a heterodimer with FitB; 4 FitAB heterodimers form a complex that binds to fitAB promoter DNA. The complex is also seen in solution.

Functionally, antitoxin component of a type II toxin-antitoxin (TA) system. Plays a role in the speed with which bacteria traverse human epithelial cells; disruption of the locus increases the speed of trafficking about 2-4-fold. Binds to its own promoter, binding affinity of the FitAB complex is 20-30-fold higher than FitA alone. No nuclease activity was observed for the FitAB complex, perhaps because FitA (the antitoxin) prevents metal binding and thus catalysis by FitB. This chain is Antitoxin FitA (fitA), found in Neisseria gonorrhoeae (strain ATCC 700825 / FA 1090).